A 291-amino-acid chain; its full sequence is Gamma-sarcoglycan (291 aa).

Topologically, residues 1 to 37 (MVREQYTTATEGICIERPENQYVYKIGIYGWRKRCLY) are cytoplasmic. A helical; Signal-anchor for type II membrane protein transmembrane segment spans residues 38–58 (LFVLLLLIILVVNLALTIWIL). Residues 59–291 (KVMWFSPAGM…TCQEHNHICL (233 aa)) lie on the Extracellular side of the membrane. A glycan (N-linked (GlcNAc...) asparagine) is linked at asparagine 110. 2 disulfide bridges follow: cysteine 265/cysteine 290 and cysteine 267/cysteine 283.

It belongs to the sarcoglycan beta/delta/gamma/zeta family. Interacts with the syntrophin SNTA1. Cross-link to form 2 major subcomplexes: one consisting of SGCB, SGCD and SGCG and the other consisting of SGCB and SGCD. The association between SGCB and SGCG is particularly strong while SGCA is loosely associated with the other sarcoglycans. Interacts with FLNC. As to expression, expressed in skeletal and heart muscle.

It is found in the cell membrane. Its subcellular location is the sarcolemma. The protein resides in the cytoplasm. The protein localises to the cytoskeleton. Component of the sarcoglycan complex, a subcomplex of the dystrophin-glycoprotein complex which forms a link between the F-actin cytoskeleton and the extracellular matrix. The polypeptide is Gamma-sarcoglycan (SGCG) (Homo sapiens (Human)).